The following is a 418-amino-acid chain: Putative ion-transport protein YfeO (418 aa).

11 helical membrane passes run 9-31, 55-77, 90-112, 122-140, 147-169, 189-211, 223-244, 259-281, 301-323, 343-363, and 376-398; these read MLLLSLPAVAIGIASSLILIMVM, SPLWIIGVLTLTGIAVGLVIRFS, LIGAPIPPSALPGLIVALILGLA, PIITVNIALAVAIGARLLP, WTILASAGTIGALFGTPVAAALI, PLMAAAAGALTTGLFFHPHFSLP, ILSGAIVAAIAIAAGMVAVWCL, FVLGIGGFILGILGVIGGPVSLF, YFLLAVIKLAALVVAAASGFRGG, VPAVPAAITVSCAILGIVLVV, and VVVPNTTLLPLLCIVMLPAWLLL.

Belongs to the chloride channel (TC 2.A.49) family.

Its subcellular location is the cell membrane. The polypeptide is Putative ion-transport protein YfeO (yfeO) (Escherichia coli O6:H1 (strain CFT073 / ATCC 700928 / UPEC)).